The chain runs to 122 residues: Large ribosomal subunit protein uL14 (122 aa).

The protein belongs to the universal ribosomal protein uL14 family. Part of the 50S ribosomal subunit. Forms a cluster with proteins L3 and L19. In the 70S ribosome, L14 and L19 interact and together make contacts with the 16S rRNA in bridges B5 and B8.

Functionally, binds to 23S rRNA. Forms part of two intersubunit bridges in the 70S ribosome. The chain is Large ribosomal subunit protein uL14 from Christiangramia forsetii (strain DSM 17595 / CGMCC 1.15422 / KT0803) (Gramella forsetii).